The sequence spans 165 residues: Chorismate pyruvate-lyase (165 aa).

Substrate contacts are provided by R77, L115, and E156.

This sequence belongs to the UbiC family. Monomer.

The protein localises to the cytoplasm. The enzyme catalyses chorismate = 4-hydroxybenzoate + pyruvate. It participates in cofactor biosynthesis; ubiquinone biosynthesis. In terms of biological role, removes the pyruvyl group from chorismate, with concomitant aromatization of the ring, to provide 4-hydroxybenzoate (4HB) for the ubiquinone pathway. The polypeptide is Chorismate pyruvate-lyase (Salmonella typhi).